Here is a 136-residue protein sequence, read N- to C-terminus: Membrane-bound negative regulator YvrL (136 aa).

The next 4 membrane-spanning stretches (helical) occupy residues 18–38 (LLAA…LFSL), 46–66 (AAHV…FEPF), 83–103 (LFIL…AHTT), and 106–126 (LISD…VFLI).

The protein localises to the cell membrane. Its function is as follows. Negatively regulates RNA polymerase sigma factor SigO-dependent transcription. Prevents the expression or secretion of OxdC under nonstress conditions. May act as an anti-sigma factor. The sequence is that of Membrane-bound negative regulator YvrL (yvrL) from Bacillus subtilis (strain 168).